Consider the following 607-residue polypeptide: Fatty acid amide hydrolase (607 aa).

Residues Lys-205 and Ser-281 each act as charge relay system in the active site. 302 to 305 contacts substrate; the sequence is GGGS. The Acyl-ester intermediate role is filled by Ser-305.

It belongs to the amidase family. In terms of assembly, forms homodimers. Expressed in roots, leaves and flowers. Expressed in seedlings, flowers, roots, siliques, seeds and leaves.

It localises to the endoplasmic reticulum membrane. It is found in the cell membrane. The catalysed reaction is N-(5Z,8Z,11Z,14Z-eicosatetraenoyl)-ethanolamine + H2O = ethanolamine + (5Z,8Z,11Z,14Z)-eicosatetraenoate. It catalyses the reaction N-(9Z,12Z-octadecadienoyl)-ethanolamine + H2O = ethanolamine + (9Z,12Z)-octadecadienoate. It carries out the reaction N-hexadecanoylethanolamine + H2O = ethanolamine + hexadecanoate. The enzyme catalyses N-tetradecanoylethanolamine + H2O = tetradecanoate + ethanolamine. The catalysed reaction is N-dodecanoylethanolamine + H2O = dodecanoate + ethanolamine. Inhibited by methyl arachidonyl fluorophosphonate (MAFP). Its function is as follows. Catalyzes the hydrolysis of bioactive endogenous fatty acid amides to their corresponding acids. The hydrolysis of endogenous amidated lipids terminates their participation as lipid mediators in various signaling systems. Converts a wide range of N-acylethanolamines (NAEs) to their corresponding free fatty acids and ethanolamine. Can use oleamide as substrate, but not indole-3-acetamide, 1-naphtalene-acetamide, nicotinic acid amide or L-asparagine. Can use 2-arachidonylglycerol as substrate. Participates in the regulation of plant growth. Hydrolyzes N-dodecanoylethanolamine, which is has a growth inhibitory effect on seedling growth. Involved in plant defense signaling. Involved in abscisic acid (ABA) signaling through mechanisms that are independent of the catalytic activity. Involved in the regulation of flowering time. Catalyzes the hydrolysis of N-acyl L-homoserine lactones (AHLs), which are a class of signaling molecules produced by bacteria for quorum sensing. Accumulation of L-homoserine appears to encourage plant growth at low concentrations by stimulating transpiration, but higher concentrations inhibit growth by stimulating ethylene production. This is Fatty acid amide hydrolase from Arabidopsis thaliana (Mouse-ear cress).